A 973-amino-acid polypeptide reads, in one-letter code: ATP-dependent DNA helicase homolog RECG1, chloroplastic/mitochondrial (973 aa).

The segment at 1–208 (MAAVTLSPCS…ATSEVEATSD (208 aa)) is sufficient for chloroplastic and mitochondrial trgeting. The segment at 174 to 200 (LLQNDDSSDPREDILDDGSSFTSKTAT) is disordered. The region spanning 536–725 (DLKRPVPMNR…LYGDISLTQI (190 aa)) is the Helicase ATP-binding domain. Residue 549-556 (GDVGCGKT) coordinates ATP. A DEQQ box motif is present at residues 655–658 (DEQQ). A Helicase C-terminal domain is found at 746-904 (GIKEVYSMML…GFYLANIDLL (159 aa)).

The protein belongs to the helicase family. RecG subfamily. In terms of tissue distribution, expressed in most tissues, not seen in pollen, ovules or developing seeds.

Its subcellular location is the plastid. It localises to the chloroplast. The protein resides in the mitochondrion. It catalyses the reaction Couples ATP hydrolysis with the unwinding of duplex DNA by translocating in the 3'-5' direction.. The catalysed reaction is ATP + H2O = ADP + phosphate + H(+). In terms of biological role, plays a critical role in recombination and DNA repair. Helps process Holliday junction (HJ) intermediates to mature products by catalyzing branch migration. Has replication fork regression activity, unwinds stalled or blocked replication forks to make a HJ that can be resolved. Has a DNA unwinding activity characteristic of a DNA helicase with 3'-5' polarity. Functionally, plays a role in recombination surveillance and repair of double-stranded (ds)DNA breaks in the mitochondrion. May be able to dissociate D- and R-loops. Able to complement UV sensitivity of a recG deletion in E.coli. This is ATP-dependent DNA helicase homolog RECG1, chloroplastic/mitochondrial from Arabidopsis thaliana (Mouse-ear cress).